Consider the following 564-residue polypeptide: 5-aminolevulinate synthase, mitochondrial (564 aa).

Residues 1 to 57 constitute a mitochondrion transit peptide; sequence MESITKVSMSVCPFVRSTSTQALRQLSQTSGALANQARQCPIAGNAIRAKEISIRSY. Residues Arg113, Ser226, and Lys245 each contribute to the substrate site. Pyridoxal 5'-phosphate contacts are provided by Ser278, His306, and Thr350. Residue Lys353 is part of the active site. The residue at position 353 (Lys353) is an N6-(pyridoxal phosphate)lysine. Residues Thr382 and Thr383 each coordinate pyridoxal 5'-phosphate. Thr468 contributes to the substrate binding site.

Belongs to the class-II pyridoxal-phosphate-dependent aminotransferase family. Homodimer. Pyridoxal 5'-phosphate is required as a cofactor.

It is found in the mitochondrion matrix. The catalysed reaction is succinyl-CoA + glycine + H(+) = 5-aminolevulinate + CO2 + CoA. Its pathway is porphyrin-containing compound metabolism; protoporphyrin-IX biosynthesis; 5-aminolevulinate from glycine: step 1/1. In terms of biological role, catalyzes the synthesis of 5-aminolevulinate (ALA) from succinyl-CoA and glycine, the first and rate-limiting step in heme biosynthesis. The polypeptide is 5-aminolevulinate synthase, mitochondrial (HEM1) (Candida albicans (strain SC5314 / ATCC MYA-2876) (Yeast)).